The primary structure comprises 429 residues: Enolase (429 aa).

Q162 contacts (2R)-2-phosphoglycerate. E204 functions as the Proton donor in the catalytic mechanism. Positions 241, 288, and 315 each coordinate Mg(2+). 4 residues coordinate (2R)-2-phosphoglycerate: K340, R369, S370, and K391. K340 serves as the catalytic Proton acceptor.

Belongs to the enolase family. The cofactor is Mg(2+).

The protein localises to the cytoplasm. It localises to the secreted. Its subcellular location is the cell surface. It carries out the reaction (2R)-2-phosphoglycerate = phosphoenolpyruvate + H2O. The protein operates within carbohydrate degradation; glycolysis; pyruvate from D-glyceraldehyde 3-phosphate: step 4/5. Its function is as follows. Catalyzes the reversible conversion of 2-phosphoglycerate (2-PG) into phosphoenolpyruvate (PEP). It is essential for the degradation of carbohydrates via glycolysis. The polypeptide is Enolase (Bacteroides fragilis (strain ATCC 25285 / DSM 2151 / CCUG 4856 / JCM 11019 / LMG 10263 / NCTC 9343 / Onslow / VPI 2553 / EN-2)).